Consider the following 215-residue polypeptide: Cytochrome b6 (215 aa).

Residues 32–52 (IFYCLGGITLTCFLVQVATGF) traverse the membrane as a helical segment. Cys-35 is a heme c binding site. Heme b contacts are provided by His-86 and His-100. Transmembrane regions (helical) follow at residues 90–110 (ASMM…TGGF), 116–136 (LTWV…VTGY), and 186–206 (LHTF…FLMI). Positions 187 and 202 each coordinate heme b.

This sequence belongs to the cytochrome b family. PetB subfamily. As to quaternary structure, the 4 large subunits of the cytochrome b6-f complex are cytochrome b6, subunit IV (17 kDa polypeptide, PetD), cytochrome f and the Rieske protein, while the 4 small subunits are PetG, PetL, PetM and PetN. The complex functions as a dimer. Heme b is required as a cofactor. The cofactor is heme c.

The protein localises to the plastid. It is found in the chloroplast thylakoid membrane. Functionally, component of the cytochrome b6-f complex, which mediates electron transfer between photosystem II (PSII) and photosystem I (PSI), cyclic electron flow around PSI, and state transitions. The protein is Cytochrome b6 of Eucalyptus globulus subsp. globulus (Tasmanian blue gum).